Here is a 671-residue protein sequence, read N- to C-terminus: DEAD-box ATP-dependent RNA helicase 7 (671 aa).

Positions 1 to 84 are disordered; sequence MPSLMLSDKK…EKKKSSKKVK (84 aa). The span at 26-41 shows a compositional bias: basic and acidic residues; it reads LDSKKGKKEQKLKLSD. Phosphoserine occurs at positions 40 and 42. Basic residues predominate over residues 50 to 60; that stretch reads KKSKKKDKKRK. Residues 96 to 124 carry the Q motif motif; the sequence is NAVSKFRISAPLREKLKANGIEALFPIQA. Positions 127–309 constitute a Helicase ATP-binding domain; that stretch reads FDMVLDGADL…NRFLKRDQKT (183 aa). Residue 140-147 coordinates ATP; it reads ARTGQGKT. A DEAD box motif is present at residues 255–258; that stretch reads DEAD. The Helicase C-terminal domain maps to 339-479; sequence LIPDIISCYS…HLAAPQPDEI (141 aa). The tract at residues 627-671 is disordered; sequence EREPLPQKRFGGGGRGNRFGGGGGNRFGGGGGRGRGGSGGRGQRY. Residues 636-671 are compositionally biased toward gly residues; it reads FGGGGRGNRFGGGGGNRFGGGGGRGRGGSGGRGQRY.

This sequence belongs to the DEAD box helicase family. DDX21/DDX50 subfamily.

The protein localises to the nucleus. It carries out the reaction ATP + H2O = ADP + phosphate + H(+). This chain is DEAD-box ATP-dependent RNA helicase 7 (RH7), found in Arabidopsis thaliana (Mouse-ear cress).